Reading from the N-terminus, the 238-residue chain is Response regulator receiver protein Anae109_2439 (238 aa).

Response regulatory domains are found at residues 3–117 and 121–228; these read RYLI…AAAR and LVAV…ERLH. Aspartate 52 and aspartate 169 each carry 4-aspartylphosphate.

Is diphosphorylated by GchK.

Member of the two-component regulatory system GcHK/Anae109_2439. Is involved in a signal transduction system responding to oxygen availability. This Anaeromyxobacter sp. (strain Fw109-5) protein is Response regulator receiver protein Anae109_2439.